Reading from the N-terminus, the 584-residue chain is PE-PGRS family protein PE_PGRS11 (584 aa).

Positions Met1–Val92 constitute a PE domain. The active-site Tele-phosphohistidine intermediate is His290. The active-site Proton donor/acceptor is the Glu365. The phosphoglycerate mutase stretch occupies residues Tyr384–Pro584.

The protein in the N-terminal section; belongs to the mycobacterial PE family. PGRS subfamily. In the C-terminal section; belongs to the phosphoglycerate mutase family. In terms of assembly, interacts with human TLR2. Requires Mg(2+) as cofactor.

The protein localises to the secreted. Its subcellular location is the cell wall. It is found in the cell surface. The enzyme catalyses (2R)-2-phosphoglycerate = (2R)-3-phosphoglycerate. Functionally, induces maturation and activation of human dendritic cells (DCs), via TLR2-dependent activation of ERK1/2, p38 MAPK, and NF-kappa-B signaling pathways, and enhances the ability of DCs to stimulate CD4(+) T cells. By activating DCs, could potentially contribute to the initiation of innate immune responses during tuberculosis infection and hence regulate the clinical course of tuberculosis. Involved in resistance to oxidative stress, via TLR2-dependent activation of the PI3K-ERK1/2-NF-kappa-B signaling pathway and expression of COX-2 and Bcl2. Also abolishes H(2)O(2)-triggered activation of p38 MAPK. In Mycobacterium tuberculosis (strain ATCC 25618 / H37Rv), this protein is PE-PGRS family protein PE_PGRS11.